We begin with the raw amino-acid sequence, 104 residues long: Large ribosomal subunit protein uL24 (104 aa).

It belongs to the universal ribosomal protein uL24 family. In terms of assembly, part of the 50S ribosomal subunit.

Functionally, one of two assembly initiator proteins, it binds directly to the 5'-end of the 23S rRNA, where it nucleates assembly of the 50S subunit. One of the proteins that surrounds the polypeptide exit tunnel on the outside of the subunit. In Proteus mirabilis (strain HI4320), this protein is Large ribosomal subunit protein uL24.